Consider the following 241-residue polypeptide: 1-(5-phosphoribosyl)-5-[(5-phosphoribosylamino)methylideneamino] imidazole-4-carboxamide isomerase (241 aa).

Residue Asp8 is the Proton acceptor of the active site. Catalysis depends on Asp130, which acts as the Proton donor.

It belongs to the HisA/HisF family.

The protein localises to the cytoplasm. It catalyses the reaction 1-(5-phospho-beta-D-ribosyl)-5-[(5-phospho-beta-D-ribosylamino)methylideneamino]imidazole-4-carboxamide = 5-[(5-phospho-1-deoxy-D-ribulos-1-ylimino)methylamino]-1-(5-phospho-beta-D-ribosyl)imidazole-4-carboxamide. It functions in the pathway amino-acid biosynthesis; L-histidine biosynthesis; L-histidine from 5-phospho-alpha-D-ribose 1-diphosphate: step 4/9. The chain is 1-(5-phosphoribosyl)-5-[(5-phosphoribosylamino)methylideneamino] imidazole-4-carboxamide isomerase from Leptospira borgpetersenii serovar Hardjo-bovis (strain JB197).